We begin with the raw amino-acid sequence, 319 residues long: Transaldolase (319 aa).

Lys-126 (schiff-base intermediate with substrate) is an active-site residue.

It belongs to the transaldolase family. Type 1 subfamily. In terms of assembly, homodimer.

The protein localises to the cytoplasm. It carries out the reaction D-sedoheptulose 7-phosphate + D-glyceraldehyde 3-phosphate = D-erythrose 4-phosphate + beta-D-fructose 6-phosphate. It participates in carbohydrate degradation; pentose phosphate pathway; D-glyceraldehyde 3-phosphate and beta-D-fructose 6-phosphate from D-ribose 5-phosphate and D-xylulose 5-phosphate (non-oxidative stage): step 2/3. Its function is as follows. Transaldolase is important for the balance of metabolites in the pentose-phosphate pathway. The protein is Transaldolase of Bordetella avium (strain 197N).